The chain runs to 911 residues: Protein translocase subunit SecA (911 aa).

Residues Q87, 105-109 (GEGKT), and D513 contribute to the ATP site. The interval 853-911 (IQLQHEQVSGLEPEAGEAPSAGEPRSEQPYVRAGRKVGRNDPCPCGSGKKFKACHGKLG) is disordered. A compositionally biased stretch (low complexity) spans 862–875 (GLEPEAGEAPSAGE). Positions 895, 897, 906, and 907 each coordinate Zn(2+). Residues 901-911 (KKFKACHGKLG) show a composition bias toward basic residues.

The protein belongs to the SecA family. In terms of assembly, monomer and homodimer. Part of the essential Sec protein translocation apparatus which comprises SecA, SecYEG and auxiliary proteins SecDF-YajC and YidC. Requires Zn(2+) as cofactor.

It localises to the cell inner membrane. The protein localises to the cytoplasm. The enzyme catalyses ATP + H2O + cellular proteinSide 1 = ADP + phosphate + cellular proteinSide 2.. Functionally, part of the Sec protein translocase complex. Interacts with the SecYEG preprotein conducting channel. Has a central role in coupling the hydrolysis of ATP to the transfer of proteins into and across the cell membrane, serving both as a receptor for the preprotein-SecB complex and as an ATP-driven molecular motor driving the stepwise translocation of polypeptide chains across the membrane. The polypeptide is Protein translocase subunit SecA (Teredinibacter turnerae (strain ATCC 39867 / T7901)).